A 194-amino-acid polypeptide reads, in one-letter code: 2,4-dinitrotoluene dioxygenase system, small oxygenase component (194 aa).

It belongs to the bacterial ring-hydroxylating dioxygenase beta subunit family. The 2,4-dinitrotoluene dioxygenase (DNTDO) multicomponent enzyme system is composed of an electron transfer component and a dioxygenase component (iron sulfur protein (ISP)). The electron transfer component is composed of a ferredoxin reductase (DntAa) and a ferredoxin (DntAb), and the dioxygenase component is formed of a large alpha subunit (DntAc) and a small beta subunit (DntAd).

Functionally, component of the 2,4-dinitrotoluene dioxygenase (DNTDO) multicomponent enzyme system which catalyzes the incorporation of both atoms of molecular oxygen into 2,4-dinitrotoluene (DNT) to form 4-methyl-5-nitrocatechol (MNC) and nitrite. The beta subunit seems to have a structural role in the holoenzyme. Also able to convert naphthalene to cis-(1R,2S)-dihydroxy-1,2-dihydronaphthalene. The sequence is that of 2,4-dinitrotoluene dioxygenase system, small oxygenase component from Burkholderia sp. (strain RASC).